The chain runs to 436 residues: 3-ketoacyl-CoA thiolase (436 aa).

The Acyl-thioester intermediate role is filled by Cys-99. Catalysis depends on proton acceptor residues His-392 and Cys-422.

It belongs to the thiolase-like superfamily. Thiolase family. In terms of assembly, heterotetramer of two alpha chains (FadJ) and two beta chains (FadI).

It is found in the cytoplasm. It carries out the reaction an acyl-CoA + acetyl-CoA = a 3-oxoacyl-CoA + CoA. It functions in the pathway lipid metabolism; fatty acid beta-oxidation. Catalyzes the final step of fatty acid oxidation in which acetyl-CoA is released and the CoA ester of a fatty acid two carbons shorter is formed. The protein is 3-ketoacyl-CoA thiolase of Shigella boydii serotype 18 (strain CDC 3083-94 / BS512).